The following is a 355-amino-acid chain: NADH-quinone oxidoreductase subunit H (355 aa).

The next 8 helical transmembrane spans lie at 17–37 (IIMV…IAYI), 86–106 (GVFL…WAVI), 119–139 (VGIL…IMAG), 165–185 (IGFV…SAVV), 204–224 (ILNW…VSAL), 262–282 (YVAI…GWLP), 291–311 (WVPG…LFAM), and 332–352 (FLPL…FAGI).

It belongs to the complex I subunit 1 family. In terms of assembly, NDH-1 is composed of 14 different subunits. Subunits NuoA, H, J, K, L, M, N constitute the membrane sector of the complex.

The protein resides in the cell inner membrane. The enzyme catalyses a quinone + NADH + 5 H(+)(in) = a quinol + NAD(+) + 4 H(+)(out). Functionally, NDH-1 shuttles electrons from NADH, via FMN and iron-sulfur (Fe-S) centers, to quinones in the respiratory chain. The immediate electron acceptor for the enzyme in this species is believed to be ubiquinone. Couples the redox reaction to proton translocation (for every two electrons transferred, four hydrogen ions are translocated across the cytoplasmic membrane), and thus conserves the redox energy in a proton gradient. This subunit may bind ubiquinone. The protein is NADH-quinone oxidoreductase subunit H of Bradyrhizobium diazoefficiens (strain JCM 10833 / BCRC 13528 / IAM 13628 / NBRC 14792 / USDA 110).